A 93-amino-acid chain; its full sequence is MASLLPQSERETLSNTLPHWQVEAGRLKRNWQFKDFSEAFAFMTRVALLAEAMQHHPNWSNVYNRVSIELTTHDLGGLSDLDVQLARSIDALC.

Belongs to the pterin-4-alpha-carbinolamine dehydratase family.

The catalysed reaction is (4aS,6R)-4a-hydroxy-L-erythro-5,6,7,8-tetrahydrobiopterin = (6R)-L-erythro-6,7-dihydrobiopterin + H2O. The chain is Putative pterin-4-alpha-carbinolamine dehydratase from Synechococcus sp. (strain WH7803).